Here is a 169-residue protein sequence, read N- to C-terminus: Cytochrome c-type biogenesis protein CcmE (169 aa).

Residues 1 to 7 are Cytoplasmic-facing; it reads MTRKSRR. The helical; Signal-anchor for type II membrane protein transmembrane segment at 8–28 threads the bilayer; sequence LILIAACGAVLALALGLILSA. The Periplasmic segment spans residues 29 to 169; it reads MSGSIVFFRS…DATLGQRSER (141 aa). Positions 122 and 126 each coordinate heme. Positions 135-169 are disordered; that stretch reads LKAQGRWQEGGGKEAPKDAAKPASADATLGQRSER. Residues 145-154 are compositionally biased toward basic and acidic residues; that stretch reads GGKEAPKDAA.

Belongs to the CcmE/CycJ family.

It localises to the cell inner membrane. Its function is as follows. Heme chaperone required for the biogenesis of c-type cytochromes. Transiently binds heme delivered by CcmC and transfers the heme to apo-cytochromes in a process facilitated by CcmF and CcmH. This Methylorubrum populi (strain ATCC BAA-705 / NCIMB 13946 / BJ001) (Methylobacterium populi) protein is Cytochrome c-type biogenesis protein CcmE.